The following is a 119-amino-acid chain: Protein TusC (119 aa).

It belongs to the DsrF/TusC family. Heterohexamer, formed by a dimer of trimers. The hexameric TusBCD complex contains 2 copies each of TusB, TusC and TusD. The TusBCD complex interacts with TusE.

The protein resides in the cytoplasm. Functionally, part of a sulfur-relay system required for 2-thiolation of 5-methylaminomethyl-2-thiouridine (mnm(5)s(2)U) at tRNA wobble positions. This chain is Protein TusC, found in Klebsiella pneumoniae (strain 342).